The primary structure comprises 310 residues: p-hydroxybenzoic acid efflux pump subunit AaeA (310 aa).

The helical transmembrane segment at 12 to 32 (AITVVLVILAFIAIFNAWVYY) threads the bilayer.

Belongs to the membrane fusion protein (MFP) (TC 8.A.1) family.

It is found in the cell inner membrane. In terms of biological role, forms an efflux pump with AaeB. This Escherichia coli O17:K52:H18 (strain UMN026 / ExPEC) protein is p-hydroxybenzoic acid efflux pump subunit AaeA.